Reading from the N-terminus, the 117-residue chain is MAQHYRVGRLEQEIEREVNDILLKRVRDPRVAGVTITGVTVTGDLQQATIYYSILSDKASDGEKTAAGLAKATGLIRSELGSRLSIYKTPELTFERDNSVQYGSRIDELINNLKRQD.

The protein belongs to the RbfA family. Monomer. Binds 30S ribosomal subunits, but not 50S ribosomal subunits or 70S ribosomes.

The protein localises to the cytoplasm. Its function is as follows. One of several proteins that assist in the late maturation steps of the functional core of the 30S ribosomal subunit. Associates with free 30S ribosomal subunits (but not with 30S subunits that are part of 70S ribosomes or polysomes). Required for efficient processing of 16S rRNA. May interact with the 5'-terminal helix region of 16S rRNA. In Lactiplantibacillus plantarum (strain ATCC BAA-793 / NCIMB 8826 / WCFS1) (Lactobacillus plantarum), this protein is Ribosome-binding factor A.